A 213-amino-acid polypeptide reads, in one-letter code: Protein-L-isoaspartate O-methyltransferase (213 aa).

Residue Ser-64 is part of the active site.

This sequence belongs to the methyltransferase superfamily. L-isoaspartyl/D-aspartyl protein methyltransferase family.

Its subcellular location is the cytoplasm. It carries out the reaction [protein]-L-isoaspartate + S-adenosyl-L-methionine = [protein]-L-isoaspartate alpha-methyl ester + S-adenosyl-L-homocysteine. In terms of biological role, catalyzes the methyl esterification of L-isoaspartyl residues in peptides and proteins that result from spontaneous decomposition of normal L-aspartyl and L-asparaginyl residues. It plays a role in the repair and/or degradation of damaged proteins. This Flavobacterium johnsoniae (strain ATCC 17061 / DSM 2064 / JCM 8514 / BCRC 14874 / CCUG 350202 / NBRC 14942 / NCIMB 11054 / UW101) (Cytophaga johnsonae) protein is Protein-L-isoaspartate O-methyltransferase.